The chain runs to 101 residues: Apolipoprotein C-II (101 aa).

The signal sequence occupies residues 1–22; the sequence is MGTRFLLALFLVLLVLGFEVQG. Positions 66 to 74 are lipid binding; the sequence is TVDEKLRDM. Residues 78 to 101 are lipoprotein lipase cofactor; the sequence is STAAMSTYAGILTDQVLSMLKGEE.

This sequence belongs to the apolipoprotein C2 family. Post-translationally, proapolipoprotein C-II is synthesized as a sialic acid containing glycoprotein which is subsequently desialylated prior to its proteolytic processing. Proapolipoprotein C-II, the major form found in plasma undergoes proteolytic cleavage of its N-terminal hexapeptide to generate apolipoprotein C-II, which occurs as the minor form in plasma.

The protein resides in the secreted. In terms of biological role, component of chylomicrons, very low-density lipoproteins (VLDL), low-density lipoproteins (LDL), and high-density lipoproteins (HDL) in plasma. Plays an important role in lipoprotein metabolism as an activator of lipoprotein lipase. Both proapolipoprotein C-II and apolipoprotein C-II can activate lipoprotein lipase. In Aotus nancymaae (Ma's night monkey), this protein is Apolipoprotein C-II (APOC2).